Consider the following 464-residue polypeptide: UDP-N-acetylmuramoylalanine--D-glutamate ligase (464 aa).

An ATP-binding site is contributed by 112-118 (GTDGKTT).

The protein belongs to the MurCDEF family.

It is found in the cytoplasm. The enzyme catalyses UDP-N-acetyl-alpha-D-muramoyl-L-alanine + D-glutamate + ATP = UDP-N-acetyl-alpha-D-muramoyl-L-alanyl-D-glutamate + ADP + phosphate + H(+). Its pathway is cell wall biogenesis; peptidoglycan biosynthesis. Functionally, cell wall formation. Catalyzes the addition of glutamate to the nucleotide precursor UDP-N-acetylmuramoyl-L-alanine (UMA). The polypeptide is UDP-N-acetylmuramoylalanine--D-glutamate ligase (Pelodictyon phaeoclathratiforme (strain DSM 5477 / BU-1)).